A 171-amino-acid polypeptide reads, in one-letter code: Large ribosomal subunit protein uL10 (171 aa).

This sequence belongs to the universal ribosomal protein uL10 family. Part of the ribosomal stalk of the 50S ribosomal subunit. The N-terminus interacts with L11 and the large rRNA to form the base of the stalk. The C-terminus forms an elongated spine to which L12 dimers bind in a sequential fashion forming a multimeric L10(L12)X complex.

In terms of biological role, forms part of the ribosomal stalk, playing a central role in the interaction of the ribosome with GTP-bound translation factors. This is Large ribosomal subunit protein uL10 (rplJ) from Lactococcus lactis subsp. lactis (strain IL1403) (Streptococcus lactis).